A 63-amino-acid polypeptide reads, in one-letter code: DNA gyrase inhibitor YacG (63 aa).

Zn(2+) contacts are provided by C10, C13, C29, and C33.

Belongs to the DNA gyrase inhibitor YacG family. In terms of assembly, interacts with GyrB. It depends on Zn(2+) as a cofactor.

Functionally, inhibits all the catalytic activities of DNA gyrase by preventing its interaction with DNA. Acts by binding directly to the C-terminal domain of GyrB, which probably disrupts DNA binding by the gyrase. The sequence is that of DNA gyrase inhibitor YacG from Chromobacterium violaceum (strain ATCC 12472 / DSM 30191 / JCM 1249 / CCUG 213 / NBRC 12614 / NCIMB 9131 / NCTC 9757 / MK).